A 389-amino-acid polypeptide reads, in one-letter code: 8-amino-7-oxononanoate synthase (389 aa).

A substrate-binding site is contributed by Arg-31. Gly-109–Tyr-110 contributes to the pyridoxal 5'-phosphate binding site. His-134 provides a ligand contact to substrate. Residues Ser-180, Asp-205–His-208, and Thr-236–Lys-239 each bind pyridoxal 5'-phosphate. An N6-(pyridoxal phosphate)lysine modification is found at Lys-239. Thr-349 contributes to the substrate binding site.

Belongs to the class-II pyridoxal-phosphate-dependent aminotransferase family. BioF subfamily. In terms of assembly, homodimer. It depends on pyridoxal 5'-phosphate as a cofactor.

The catalysed reaction is 6-carboxyhexanoyl-[ACP] + L-alanine + H(+) = (8S)-8-amino-7-oxononanoate + holo-[ACP] + CO2. It participates in cofactor biosynthesis; biotin biosynthesis. Functionally, catalyzes the decarboxylative condensation of pimeloyl-[acyl-carrier protein] and L-alanine to produce 8-amino-7-oxononanoate (AON), [acyl-carrier protein], and carbon dioxide. This Mycobacterium marinum (strain ATCC BAA-535 / M) protein is 8-amino-7-oxononanoate synthase.